Consider the following 604-residue polypeptide: NADP-dependent malic enzyme, mitochondrial (604 aa).

Residues 28–50 (SAPAQGCHSKSGPPRPVPLKKRG) form a disordered region. Catalysis depends on Tyr-137, which acts as the Proton donor. Arg-190 provides a ligand contact to NADP(+). The active-site Proton acceptor is Lys-208. 3 residues coordinate a divalent metal cation: Glu-280, Asp-281, and Asp-304. Residue Asp-304 coordinates NADP(+). Ser-371 is modified (phosphoserine). Asn-443 is a binding site for NADP(+).

The protein belongs to the malic enzymes family. Mg(2+) is required as a cofactor. Mn(2+) serves as cofactor.

It localises to the mitochondrion matrix. It catalyses the reaction (S)-malate + NADP(+) = pyruvate + CO2 + NADPH. The enzyme catalyses oxaloacetate + H(+) = pyruvate + CO2. In Mus musculus (Mouse), this protein is NADP-dependent malic enzyme, mitochondrial (Me3).